The following is a 321-amino-acid chain: Thioredoxin reductase tcpT (321 aa).

FAD contacts are provided by residues 14–17, 36–41, H49, and A114; these read GGPA and DSGRYR. The cysteines at positions 138 and 141 are disulfide-linked. FAD is bound by residues D282 and 289–290; that span reads NV.

It belongs to the class-II pyridine nucleotide-disulfide oxidoreductase family. As to quaternary structure, homodimer. Requires FAD as cofactor.

Its pathway is secondary metabolite biosynthesis. Functionally, thioredoxin reductase; part of the gene cluster that mediates the biosynthesis of an unusual class of epipolythiodioxopiperazines (ETPs) lacking the reactive thiol group important for toxicity. Firstly, L-tyrosine is prenylated by tcpD, before undergoing condensation with L-glycine in a reaction catalyzed by the NRPS tcpP leading to the diketopiperazine (DKP) backbone. Afterwards the alpha-carbon of tyrosine is oxidized by the cytochrome P450 tcpC to form a hydroxyl group. However, in contrast other ETP biosynthesis pathways studied so far, tcpC is not able to bishydroxylate the DKP at both alpha-carbon positions, but hydroxylates the alpha-carbon of the tyrosine part and the nitrogen of the glycine part. The next steps involve an alpha,beta-elimination reaction catalyzed by tcpI, a methylation by the methyltransferase tcpN the action of the four enzyme cascade tcpG/K/J/I. Due to a dysfunctional cytochrome P450 monooxygenase tcpC, the pathway leads to the biosynthesis of probable non-toxic metabolites lacking the reactive thiol group. The chain is Thioredoxin reductase tcpT from Claviceps purpurea (strain 20.1) (Ergot fungus).